Here is a 468-residue protein sequence, read N- to C-terminus: 3-isopropylmalate dehydratase large subunit (468 aa).

Cys349, Cys409, and Cys412 together coordinate [4Fe-4S] cluster.

This sequence belongs to the aconitase/IPM isomerase family. LeuC type 1 subfamily. Heterodimer of LeuC and LeuD. It depends on [4Fe-4S] cluster as a cofactor.

It carries out the reaction (2R,3S)-3-isopropylmalate = (2S)-2-isopropylmalate. The protein operates within amino-acid biosynthesis; L-leucine biosynthesis; L-leucine from 3-methyl-2-oxobutanoate: step 2/4. Functionally, catalyzes the isomerization between 2-isopropylmalate and 3-isopropylmalate, via the formation of 2-isopropylmaleate. This is 3-isopropylmalate dehydratase large subunit from Jannaschia sp. (strain CCS1).